The primary structure comprises 508 residues: Photosystem II CP47 reaction center protein (508 aa).

Transmembrane regions (helical) follow at residues 21 to 36, 101 to 115, 140 to 156, 203 to 218, 237 to 252, and 457 to 472; these read SVHI…WAGS, IVFS…IWHW, GIHL…FGAF, IAAG…FHLS, VLSS…AFVV, and SFAL…HGAR.

It belongs to the PsbB/PsbC family. PsbB subfamily. PSII is composed of 1 copy each of membrane proteins PsbA, PsbB, PsbC, PsbD, PsbE, PsbF, PsbH, PsbI, PsbJ, PsbK, PsbL, PsbM, PsbT, PsbX, PsbY, PsbZ, Psb30/Ycf12, at least 3 peripheral proteins of the oxygen-evolving complex and a large number of cofactors. It forms dimeric complexes. The cofactor is Binds multiple chlorophylls. PSII binds additional chlorophylls, carotenoids and specific lipids..

It localises to the plastid. The protein localises to the chloroplast thylakoid membrane. In terms of biological role, one of the components of the core complex of photosystem II (PSII). It binds chlorophyll and helps catalyze the primary light-induced photochemical processes of PSII. PSII is a light-driven water:plastoquinone oxidoreductase, using light energy to abstract electrons from H(2)O, generating O(2) and a proton gradient subsequently used for ATP formation. This Lemna minor (Common duckweed) protein is Photosystem II CP47 reaction center protein.